The primary structure comprises 63 residues: Large ribosomal subunit protein uL29 (63 aa).

It belongs to the universal ribosomal protein uL29 family.

In Bordetella avium (strain 197N), this protein is Large ribosomal subunit protein uL29.